The following is a 296-amino-acid chain: MRIAVPNKGRLHDPTLSLLERAGLHTEETADRQLYADTVDPDVSILFARAADIPEYVRDGAADVGITGLDQAAESGGVADSASAAGDDDLVDLLDLGYGSCKLVLAAPEDGDISVVADLAGGTVATEFPNITRDYLDRVDVDADVVTVTGATELTPHVDMADAIVDITSTGTTLKVNRLAVIDDVLDSSVRLFARPDMVDDAKVKQVLTAFESVLAADGRRYLMMNAPKERLDEVKDVIPGLGGPTVMDVEADENGNGMVAVHAVVEERDVFATISELKSVGATGILVTKIERLVG.

Belongs to the ATP phosphoribosyltransferase family. Long subfamily. Mg(2+) is required as a cofactor.

The protein resides in the cytoplasm. It catalyses the reaction 1-(5-phospho-beta-D-ribosyl)-ATP + diphosphate = 5-phospho-alpha-D-ribose 1-diphosphate + ATP. Its pathway is amino-acid biosynthesis; L-histidine biosynthesis; L-histidine from 5-phospho-alpha-D-ribose 1-diphosphate: step 1/9. Feedback inhibited by histidine. Catalyzes the condensation of ATP and 5-phosphoribose 1-diphosphate to form N'-(5'-phosphoribosyl)-ATP (PR-ATP). Has a crucial role in the pathway because the rate of histidine biosynthesis seems to be controlled primarily by regulation of HisG enzymatic activity. The chain is ATP phosphoribosyltransferase from Halorubrum lacusprofundi (strain ATCC 49239 / DSM 5036 / JCM 8891 / ACAM 34).